Here is a 562-residue protein sequence, read N- to C-terminus: Endoglucanase E1 (562 aa).

An N-terminal signal peptide occupies residues M1–A41. A catalytic region spans residues A42–G400. An intrachain disulfide couples C75 to C161. Residue E203 is the Proton donor of the active site. An intrachain disulfide couples C209 to C212. E323 serves as the catalytic Nucleophile. Residues V399–G462 form a disordered region. Composition is skewed to low complexity over residues A401–P411 and P437–P449. One can recognise a CBM2 domain in the interval T458–S562.

This sequence belongs to the glycosyl hydrolase 5 (cellulase A) family.

The enzyme catalyses Endohydrolysis of (1-&gt;4)-beta-D-glucosidic linkages in cellulose, lichenin and cereal beta-D-glucans.. Functionally, has a very high specific activity on carboxymethylcellulose. In Acidothermus cellulolyticus (strain ATCC 43068 / DSM 8971 / 11B), this protein is Endoglucanase E1.